The following is a 62-amino-acid chain: Photosystem II reaction center protein Z (62 aa).

Helical transmembrane passes span 8 to 28 and 41 to 61; these read AVFA…VVLA and FSGA…NSLI.

The protein belongs to the PsbZ family. As to quaternary structure, PSII is composed of 1 copy each of membrane proteins PsbA, PsbB, PsbC, PsbD, PsbE, PsbF, PsbH, PsbI, PsbJ, PsbK, PsbL, PsbM, PsbT, PsbY, PsbZ, Psb30/Ycf12, at least 3 peripheral proteins of the oxygen-evolving complex and a large number of cofactors. It forms dimeric complexes.

The protein resides in the plastid. The protein localises to the chloroplast thylakoid membrane. Its function is as follows. May control the interaction of photosystem II (PSII) cores with the light-harvesting antenna, regulates electron flow through the 2 photosystem reaction centers. PSII is a light-driven water plastoquinone oxidoreductase, using light energy to abstract electrons from H(2)O, generating a proton gradient subsequently used for ATP formation. This chain is Photosystem II reaction center protein Z, found in Huperzia lucidula (Shining clubmoss).